The sequence spans 147 residues: MRTIFVGVLLLAIMGEGRLCALEWPVDKPKFLSLFGQSVGAGLLQQGLIFDGADSAGERGYAVRTAGYGRCVMRLQKHRRARVFPGALGNALIFAHEDGLQTVYANLREAKNAQDFGSTAEAESGVTVGYAGSSAWAPPNSFVFPGD.

The N-terminal stretch at Met-1–Ala-21 is a signal peptide.

This is an uncharacterized protein from Treponema pallidum (strain Nichols).